The sequence spans 472 residues: Ribosomal RNA small subunit methyltransferase F (472 aa).

Residues 123-129 (AAAPGSK), glutamate 147, aspartate 174, and aspartate 192 contribute to the S-adenosyl-L-methionine site. Residue cysteine 245 is the Nucleophile of the active site.

Belongs to the class I-like SAM-binding methyltransferase superfamily. RsmB/NOP family.

The protein localises to the cytoplasm. The catalysed reaction is cytidine(1407) in 16S rRNA + S-adenosyl-L-methionine = 5-methylcytidine(1407) in 16S rRNA + S-adenosyl-L-homocysteine + H(+). Functionally, specifically methylates the cytosine at position 1407 (m5C1407) of 16S rRNA. This is Ribosomal RNA small subunit methyltransferase F from Vibrio vulnificus (strain CMCP6).